The primary structure comprises 398 residues: Stearoyl-[acyl-carrier-protein] 9-desaturase, chloroplastic (398 aa).

The transit peptide at 1-34 (MALKLNPLASQPYNFPSSARPPISTFRSPKFLCL) directs the protein to the chloroplast. E140, E178, H181, E231, E264, and H267 together coordinate Fe cation.

This sequence belongs to the fatty acid desaturase type 2 family. In terms of assembly, homodimer. The cofactor is Fe(2+).

The protein resides in the plastid. It is found in the chloroplast. The catalysed reaction is octadecanoyl-[ACP] + 2 reduced [2Fe-2S]-[ferredoxin] + O2 + 2 H(+) = (9Z)-octadecenoyl-[ACP] + 2 oxidized [2Fe-2S]-[ferredoxin] + 2 H2O. The protein operates within lipid metabolism; fatty acid metabolism. In terms of biological role, converts stearoyl-ACP to oleoyl-ACP by introduction of a cis double bond between carbons 9 and 10 of the acyl chain. This Brassica napus (Rape) protein is Stearoyl-[acyl-carrier-protein] 9-desaturase, chloroplastic.